A 310-amino-acid chain; its full sequence is MASYLDFEKGIKQIDDDIANAKIRGDEHAVEILRKNLEKEITKTYKNLNEFQRLNLARHPDRPYALDYIRALLKDGYEIHGDRAFRDDPSIVCYIGYIGGKRVIVIAEQKGRGTKYKIMRNFGMPHPEGYRKALRIARLAEKFEIPIIFLIDTPGAYPGVGAEERGQSEAIARNLFEFSELKTRTIAVVIGEGGSGGALAIGVADRLAMMKNSVFSVISPEGCAAILWNDPSKNEAATKAMKITADDLKELQLIDDVIDEPVMGAHRDKEGAIKALGEYILKQLDELEKKDINDVVKNRIEKILSVGAYA.

The CoA carboxyltransferase C-terminal domain occupies 36-286 (NLEKEITKTY…GEYILKQLDE (251 aa)).

The protein belongs to the AccA family. Acetyl-CoA carboxylase is a heterohexamer composed of biotin carboxyl carrier protein (AccB), biotin carboxylase (AccC) and two subunits each of ACCase subunit alpha (AccA) and ACCase subunit beta (AccD).

It localises to the cytoplasm. It carries out the reaction N(6)-carboxybiotinyl-L-lysyl-[protein] + acetyl-CoA = N(6)-biotinyl-L-lysyl-[protein] + malonyl-CoA. Its pathway is lipid metabolism; malonyl-CoA biosynthesis; malonyl-CoA from acetyl-CoA: step 1/1. Component of the acetyl coenzyme A carboxylase (ACC) complex. First, biotin carboxylase catalyzes the carboxylation of biotin on its carrier protein (BCCP) and then the CO(2) group is transferred by the carboxyltransferase to acetyl-CoA to form malonyl-CoA. In Campylobacter fetus subsp. fetus (strain 82-40), this protein is Acetyl-coenzyme A carboxylase carboxyl transferase subunit alpha.